A 128-amino-acid polypeptide reads, in one-letter code: AECKVTVDSTDQMSFNTKDIAIDKSCKTFTVELTHSGSLPKNVMGHNLVISKEADMQPIATDGLSAGIDKQYLKDGDARVIAHTKVIGAGEKDSVTFDVSKLAAGEKYGFFCSFPGHISMMKGTVTLK.

Residues 1–128 (AECKVTVDST…SMMKGTVTLK (128 aa)) form the Plastocyanin-like domain. The cysteines at positions 3 and 26 are disulfide-linked. Positions 46, 112, 117, and 121 each coordinate Cu cation.

It localises to the periplasm. In terms of biological role, transfers electrons from cytochrome c551 to cytochrome oxidase. In Pseudomonas putida (Arthrobacter siderocapsulatus), this protein is Azurin.